We begin with the raw amino-acid sequence, 329 residues long: NADH-quinone oxidoreductase subunit H (329 aa).

Helical transmembrane passes span 9–29 (LIKI…ATYI), 42–62 (GPCY…IKLF), 75–95 (FIFT…MAPI), 117–137 (IGFL…ILAG), 154–174 (IQLL…LMVV), 188–208 (GGFL…FLIA), 238–258 (LKWG…SFVI), 269–291 (WGFI…LSMW), and 309–329 (WKIM…IILI).

Belongs to the complex I subunit 1 family. In terms of assembly, NDH-1 is composed of 14 different subunits. Subunits NuoA, H, J, K, L, M, N constitute the membrane sector of the complex.

Its subcellular location is the cell inner membrane. It catalyses the reaction a quinone + NADH + 5 H(+)(in) = a quinol + NAD(+) + 4 H(+)(out). Its function is as follows. NDH-1 shuttles electrons from NADH, via FMN and iron-sulfur (Fe-S) centers, to quinones in the respiratory chain. The immediate electron acceptor for the enzyme in this species is believed to be ubiquinone. Couples the redox reaction to proton translocation (for every two electrons transferred, four hydrogen ions are translocated across the cytoplasmic membrane), and thus conserves the redox energy in a proton gradient. This subunit may bind ubiquinone. The protein is NADH-quinone oxidoreductase subunit H of Helicobacter pylori (strain P12).